Consider the following 343-residue polypeptide: 2-deoxy-scyllo-inosamine dehydrogenase (343 aa).

Positions 37, 59, 91, 94, 97, 105, and 146 each coordinate Zn(2+).

This sequence belongs to the zinc-containing alcohol dehydrogenase family. DOIA dehydrogenase subfamily. Zn(2+) is required as a cofactor.

It carries out the reaction 2-deoxy-scyllo-inosamine + NADP(+) = 3-amino-2,3-dideoxy-scyllo-inosose + NADPH + H(+). The enzyme catalyses 2-deoxy-scyllo-inosamine + NAD(+) = 3-amino-2,3-dideoxy-scyllo-inosose + NADH + H(+). The protein operates within metabolic intermediate biosynthesis; 2-deoxystreptamine biosynthesis; 2-deoxystreptamine from D-glucose 6-phosphate: step 3/4. Its pathway is antibiotic biosynthesis; kanamycin biosynthesis. Catalyzes the oxidation of 2-deoxy-scyllo-inosamine (DOIA) with NAD(+) or NADP(+), forming 3-amino-2,3-dideoxy-scyllo-inosose (amino-DOI). The polypeptide is 2-deoxy-scyllo-inosamine dehydrogenase (kanE) (Streptomyces kanamyceticus).